The following is a 359-amino-acid chain: Cyclin-Y-like protein 1 (359 aa).

Phosphoserine is present on residues serine 67, serine 105, and serine 112. The Cyclin N-terminal domain maps to 145 to 267 (VTLAIYYHIK…CQILKDITVE (123 aa)). Serine 344 bears the Phosphoserine mark.

The protein belongs to the cyclin family. Cyclin Y subfamily. As to quaternary structure, interacts with CDK16; this interaction mutually increases the stability of CDK16 and CCNYL1 and increases the kinase activity of CDK16.

The protein resides in the cell membrane. Functionally, key regulator of Wnt signaling implicated in various biological processes including male fertility, embryonic neurogenesis and cortex development. Activates the cyclin-dependent kinase CDK16, and promotes sperm maturation. The polypeptide is Cyclin-Y-like protein 1 (Homo sapiens (Human)).